We begin with the raw amino-acid sequence, 210 residues long: Neurotrophin-4 (210 aa).

A signal peptide spans 1 to 24; that stretch reads MLPLPSCSLPILLLFLLPSVPIES. Positions 25–80 are excised as a propeptide; sequence QPPPSTLPPFLAPEWDLLSPRVVLSRGAPAGPPLLFLLEAGAFRESAGAPANRSRR. Asn76 carries an N-linked (GlcNAc...) asparagine glycan. 3 disulfide bridges follow: Cys97–Cys170, Cys141–Cys199, and Cys158–Cys201.

This sequence belongs to the NGF-beta family. Highest levels in prostate, lower levels in thymus, placenta, and skeletal muscle. Expressed in embryonic and adult tissues.

It is found in the secreted. In terms of biological role, target-derived survival factor for peripheral sensory sympathetic neurons. May promote ameloblast differentiation and subsequent reduction in proliferation of ameloblasts. The protein is Neurotrophin-4 (NTF4) of Homo sapiens (Human).